Consider the following 307-residue polypeptide: Protein FAM76A (307 aa).

2 disordered regions span residues 142–195 (QRKH…ESIT) and 287–307 (KQAA…ITSP). The segment covering 161 to 182 (SRLSGGSHYNSQKTLSTSSIQN) has biased composition (polar residues). Positions 217-299 (IIAQLKEEVA…AALSKSKKSE (83 aa)) form a coiled coil.

It belongs to the FAM76 family.

The protein is Protein FAM76A (FAM76A) of Bos taurus (Bovine).